A 327-amino-acid chain; its full sequence is Serpentine receptor class gamma-2 (327 aa).

6 helical membrane-spanning segments follow: residues 35–55 (LVQFVYLLPAAMLHARILYIL), 70–90 (ILFIMSCIACFTLVVQDIFFA), 157–177 (MKYAIALVILTPFLFIWNIII), 181–203 (LPVYTFGGFYIGYERVVIWATMT), 244–264 (IASFLISSCFLGTAAAESLFA), and 277–297 (FLLPISWDILNVGTPIVMVMA).

The protein belongs to the nematode receptor-like protein srg family.

The protein resides in the membrane. This chain is Serpentine receptor class gamma-2 (srg-2), found in Caenorhabditis elegans.